A 923-amino-acid chain; its full sequence is Isoleucine--tRNA ligase (923 aa).

Positions Pro-57–His-67 match the 'HIGH' region motif. Glu-553 contacts L-isoleucyl-5'-AMP. A 'KMSKS' region motif is present at residues Lys-594–Ser-598. Lys-597 contributes to the ATP binding site. 4 residues coordinate Zn(2+): Cys-888, Cys-891, Cys-908, and Cys-911.

Belongs to the class-I aminoacyl-tRNA synthetase family. IleS type 1 subfamily. Monomer. Zn(2+) is required as a cofactor.

Its subcellular location is the cytoplasm. The enzyme catalyses tRNA(Ile) + L-isoleucine + ATP = L-isoleucyl-tRNA(Ile) + AMP + diphosphate. In terms of biological role, catalyzes the attachment of isoleucine to tRNA(Ile). As IleRS can inadvertently accommodate and process structurally similar amino acids such as valine, to avoid such errors it has two additional distinct tRNA(Ile)-dependent editing activities. One activity is designated as 'pretransfer' editing and involves the hydrolysis of activated Val-AMP. The other activity is designated 'posttransfer' editing and involves deacylation of mischarged Val-tRNA(Ile). The polypeptide is Isoleucine--tRNA ligase (Shouchella clausii (strain KSM-K16) (Alkalihalobacillus clausii)).